A 61-amino-acid chain; its full sequence is Copper metallothionein 1-1 (61 aa).

A propeptide spanning residues 1-8 (MFSELINF) is cleaved from the precursor. Residues Cys15, Cys17, Cys19, Cys22, and Cys28 each coordinate Cu cation. Lys30 participates in a covalent cross-link: Glycyl lysine isopeptide (Lys-Gly) (interchain with G-Cter in ubiquitin). 5 residues coordinate Cu cation: Cys32, Cys34, Cys38, Cys44, and Cys46. Residues 37 to 61 (GCNSDDKCPCGNKSEETKKSCCSGK) are disordered. The span at 40 to 55 (SDDKCPCGNKSEETKK) shows a compositional bias: basic and acidic residues.

This sequence belongs to the metallothionein superfamily. Type 12 family.

In terms of biological role, protects the cell against copper toxicity by tightly chelating copper ions. May also act as a depository for copper designated for the effective transfer into the apo forms of copper proteins. In Saccharomyces cerevisiae (strain ATCC 204508 / S288c) (Baker's yeast), this protein is Copper metallothionein 1-1 (CUP1-1).